A 556-amino-acid chain; its full sequence is Urocanate hydratase (556 aa).

Residues 52 to 53 (GG), Gln-130, 176 to 178 (GMG), Glu-196, Arg-201, 242 to 243 (NA), 263 to 267 (QTSAH), 273 to 274 (YL), and Tyr-322 each bind NAD(+). Residue Cys-410 is part of the active site. Gly-492 serves as a coordination point for NAD(+).

Belongs to the urocanase family. Requires NAD(+) as cofactor.

The protein localises to the cytoplasm. It catalyses the reaction 4-imidazolone-5-propanoate = trans-urocanate + H2O. It participates in amino-acid degradation; L-histidine degradation into L-glutamate; N-formimidoyl-L-glutamate from L-histidine: step 2/3. Catalyzes the conversion of urocanate to 4-imidazolone-5-propionate. The protein is Urocanate hydratase of Bradyrhizobium sp. (strain BTAi1 / ATCC BAA-1182).